The sequence spans 1074 residues: MSRGHNIKKSLTPQISCSTSESYKQLDFLPDKLRAKLLPFQKDGITFALRRDGRCMVADEMGLGKTVQAIGIAYFYKEEWPLLIVVPSSLRYPWTEEIEKWIPELSPEEINVIQNKTDVGRISTSKVTVLGYGLLTTDAETLIDALNNQNFKVVIVDESHYMKSRSATRSRILLPIVQKAKRAILLTGTPALGRPEELFMQIEALFPQKFGTWTEYAKRYCNAHVRYFGRRSQWDCRGASNLNELHQLLSDIMIRRLKTEVLTQLPPKIRQRIPFDLPSAAAKELNSSFEEWEKLMRDPYSGATETVMGLITRMFKQTAIAKAGAVKDYIKMMLQNDSLKFLVFAHHLSMLQACTEAVIENKTRYIRIDGSVPSSERIHLVNQFQKDPETRVAILSIQAAGQGLTFTAATHVVFAELYWDPGHIKQAEDRAHRIGQCSSVNIHYLIANGTLDTLMWGMLNRKAQVTGSTLNGRKEKLQAEEGDKEKWDFLQFAEAWTPNERSEELRDEMLFTHFEKEKQRDIRSFFLPNAKKRQLETSCDESRVSQEKNTIVPADPVKTATRGDESDLEPEAKKLKSVAIDDPCRPPEEQPCRPGQAEALLTFGICKAKAQATTPAFCGEGWQCAFCTYINNSVLPYCEMCENPRGGAVPQIDSLNQTQNKNKNEKDDSQDTSKKIQTSSDGEKQVLAHSTPEPLAKSKEEISTTESEDRLTPQPGDEQLKNWPVYDTLMFCASKNTDRIHVYTKDGNQMNCNFIPLDIKLDLWEDLPASFQLKQNRSLILRFVREWSSLTAMKQKIIKKSGQLFRSPVLALEEIAKQQTKQNSTKRYITKEDVAAASMDKVKNDGGHVRLITKGPKPGDPSTKEFLEGGECVPFLNPCTAQGDLILKASTSKGYLQAVDNEGNPLCLRCQQPTCQTKQERKADAWDSRFCSLKCQEEFWIRSNNSYLRAKVFEIEHGVCQLCNLNAQELFLRLRDAPKSQRKSLLDATWTSKLPLEQLNEMIRSPGEGHFWQVDHIKPVSGGGGQCSLDNLQTLCTVCHRERTAQQAKERSQVRRQSLASNHGSDITRFLVKK.

Residues 46-208 form the Helicase ATP-binding domain; it reads TFALRRDGRC…FMQIEALFPQ (163 aa). Residues 46–481 are DNA annealing helicase activity; it reads TFALRRDGRC…GRKEKLQAEE (436 aa). Residue 59–66 participates in ATP binding; that stretch reads DEMGLGKT. A DEAH box motif is present at residues 157–160; sequence DESH. The 157-residue stretch at 325-481 folds into the Helicase C-terminal domain; the sequence is AVKDYIKMML…GRKEKLQAEE (157 aa). The PIP-box signature appears at 519-526; that stretch reads QRDIRSFF. Residue serine 566 is modified to Phosphoserine. The RanBP2-type zinc-finger motif lies at 617–647; sequence FCGEGWQCAFCTYINNSVLPYCEMCENPRGG. Residues 659–719 form a disordered region; sequence QNKNKNEKDD…RLTPQPGDEQ (61 aa). Composition is skewed to basic and acidic residues over residues 662 to 674 and 696 to 711; these read NKNEKDDSQDTSK and AKSKEEISTTESEDRL. The HNH domain occupies 1006-1046; sequence PGEGHFWQVDHIKPVSGGGGQCSLDNLQTLCTVCHRERTAQ. The endonuclease activity stretch occupies residues 1006–1074; that stretch reads PGEGHFWQVD…SDITRFLVKK (69 aa). Positions 1069–1073 match the APIM motif motif; that stretch reads RFLVK.

This sequence belongs to the SNF2/RAD54 helicase family. As to quaternary structure, interacts (via PIP-box and RanBP2-type zinc finger) with PCNA (when PCNA is polyubiquitinated via 'Lys-63'-linked polyubiquitin).

The protein resides in the nucleus. It is found in the chromosome. DNA annealing helicase and endonuclease required to maintain genome stability at stalled or collapsed replication forks by facilitating fork restart and limiting inappropriate recombination that could occur during template switching events. Recruited to the sites of stalled DNA replication by polyubiquitinated PCNA and acts as a structure-specific endonuclease that cleaves the replication fork D-loop intermediate, generating an accessible 3'-OH group in the template of the leading strand, which is amenable to extension by DNA polymerase. In addition to endonuclease activity, also catalyzes the fork regression via annealing helicase activity in order to prevent disintegration of the replication fork and the formation of double-strand breaks. This is DNA annealing helicase and endonuclease ZRANB3 (ZRANB3) from Bos taurus (Bovine).